A 205-amino-acid polypeptide reads, in one-letter code: Heme ligase (205 aa).

Positions 48–203 (KRTIINLIYS…GVVHIVDKPI (156 aa)) constitute an FAS1 domain. Positions 154–172 (LRNLLNNDLIVKIEGEFKH) are required for binding to host hemoglobin. Heme binding domain stretches follow at residues 171-181 (KHCNHSIYLNG) and 191-200 (CHNGVVHIVD).

As to quaternary structure, component of the hemozoin formation complex (HFC) composed of falcipains FP2A and/or FP2B, plasmepsins PMII, PMIII/HAP and PMIV, heme detoxifying protein HDP and falcilysin FLN. The HFC complex is involved in hemoglobin degradation and detoxification of heme in the food vacuole during the asexual blood stage. Interacts with falcipain 2; the interaction is direct and enhances HDP catalytic activity. Interacts with host hemoglobin.

The protein localises to the vacuole. It is found in the host cytoplasm. Its subcellular location is the host cytosol. The enzyme catalyses 2 Fe(III)-heme b = beta-hematin. Heme detoxifying enzyme that converts heme to crystalline hemozoin (beta-hematin) to protect the organism from the toxic effects of heme. During its development, P.falciparum proteolyzes vast amounts of host hemoglobin, leading to heme release. The chain is Heme ligase from Plasmodium falciparum (isolate 3D7).